Reading from the N-terminus, the 63-residue chain is Large ribosomal subunit protein bL28 (63 aa).

Belongs to the bacterial ribosomal protein bL28 family.

The polypeptide is Large ribosomal subunit protein bL28 (Desulfatibacillum aliphaticivorans).